The following is a 508-amino-acid chain: Adenosine deaminase (508 aa).

The first 18 residues, Met-1 to Ala-18, serve as a signal peptide directing secretion.

Belongs to the metallo-dependent hydrolases superfamily. Adenosine and AMP deaminases family. ADGF subfamily. The cofactor is Zn(2+). As to expression, salivary gland (at protein level).

It is found in the secreted. It catalyses the reaction adenosine + H2O + H(+) = inosine + NH4(+). Functionally, catalyzes the deamination of adenosine to inosine. The chain is Adenosine deaminase from Lutzomyia longipalpis (Sand fly).